A 509-amino-acid chain; its full sequence is Maturase K (509 aa).

The protein belongs to the intron maturase 2 family. MatK subfamily.

Its subcellular location is the plastid. The protein localises to the chloroplast. Functionally, usually encoded in the trnK tRNA gene intron. Probably assists in splicing its own and other chloroplast group II introns. This Clematis florida (Asian virgin's bower) protein is Maturase K.